Here is a 658-residue protein sequence, read N- to C-terminus: Carnitine O-palmitoyltransferase 2, mitochondrial (658 aa).

The N-terminal 25 residues, 1 to 25 (MVPRLLLRAWPRGPAVGPGAPSRPL), are a transit peptide targeting the mitochondrion. The Mitochondrial matrix segment spans residues 26 to 178 (SAGSGPGQYL…GLLEPEVFHL (153 aa)). Lysine 69 is subject to N6-succinyllysine. Residue lysine 79 is modified to N6-acetyllysine. At lysine 85 the chain carries N6-succinyllysine. The note=Mitochondrial inner membrane intramembrane region spans 179-208 (NPAKSDTITFKRLIRFVPSSLSWYGAYLVN). At 209–658 (AYPLDMSQYF…DALEGKSIKS (450 aa)) the chain is on the mitochondrial matrix side. Lysine 239 carries the N6-acetyllysine; alternate modification. At lysine 239 the chain carries N6-succinyllysine; alternate. Lysine 305 is subject to N6-acetyllysine. Catalysis depends on histidine 372, which acts as the Proton acceptor. An N6-succinyllysine mark is found at lysine 424 and lysine 439. 452–464 (GKEFLKKQKLSPD) is a binding site for CoA. (R)-carnitine is bound by residues tyrosine 486, serine 488, and threonine 499. Residues lysine 510 and lysine 544 each carry the N6-acetyllysine; alternate modification. 2 positions are modified to N6-succinyllysine; alternate: lysine 510 and lysine 544.

Belongs to the carnitine/choline acetyltransferase family.

It localises to the mitochondrion inner membrane. The catalysed reaction is (R)-carnitine + hexadecanoyl-CoA = O-hexadecanoyl-(R)-carnitine + CoA. It catalyses the reaction octanoyl-CoA + (R)-carnitine = O-octanoyl-(R)-carnitine + CoA. It carries out the reaction decanoyl-CoA + (R)-carnitine = O-decanoyl-(R)-carnitine + CoA. The enzyme catalyses dodecanoyl-CoA + (R)-carnitine = O-dodecanoyl-R-carnitine + CoA. The catalysed reaction is tetradecanoyl-CoA + (R)-carnitine = O-tetradecanoyl-(R)-carnitine + CoA. It catalyses the reaction (R)-carnitine + octadecanoyl-CoA = O-octadecanoyl-(R)-carnitine + CoA. It carries out the reaction eicosanoyl-CoA + (R)-carnitine = O-eicosanoyl-(R)-carnitine + CoA. The enzyme catalyses (9Z)-tetradecenoyl-CoA + (R)-carnitine = O-(9Z)-tetradecenoyl-(R)-carnitine + CoA. The catalysed reaction is (5Z)-tetradecenoyl-CoA + (R)-carnitine = O-(5Z)-tetradecenoyl-(R)-carnitine + CoA. It catalyses the reaction (R)-carnitine + (9Z)-octadecenoyl-CoA = O-(9Z)-octadecenoyl-(R)-carnitine + CoA. It carries out the reaction 4,8-dimethylnonanoyl-CoA + (R)-carnitine = O-4,8-dimethylnonanoyl-(R)-carnitine + CoA. The protein operates within lipid metabolism; fatty acid beta-oxidation. With respect to regulation, inhibited by trans-2-hexadecanoyl-CoA. In terms of biological role, involved in the intramitochondrial synthesis of acylcarnitines from accumulated acyl-CoA metabolites. Reconverts acylcarnitines back into the respective acyl-CoA esters that can then undergo beta-oxidation, an essential step for the mitochondrial uptake of long-chain fatty acids and their subsequent beta-oxidation in the mitochondrion. Active with medium (C8-C12) and long-chain (C14-C18) acyl-CoA esters. The chain is Carnitine O-palmitoyltransferase 2, mitochondrial from Homo sapiens (Human).